The primary structure comprises 350 residues: Phenylalanine--tRNA ligase alpha subunit (350 aa).

Glu-257 is a binding site for Mg(2+).

Belongs to the class-II aminoacyl-tRNA synthetase family. Phe-tRNA synthetase alpha subunit type 1 subfamily. Tetramer of two alpha and two beta subunits. Mg(2+) is required as a cofactor.

The protein localises to the cytoplasm. The enzyme catalyses tRNA(Phe) + L-phenylalanine + ATP = L-phenylalanyl-tRNA(Phe) + AMP + diphosphate + H(+). In Listeria monocytogenes serotype 4b (strain CLIP80459), this protein is Phenylalanine--tRNA ligase alpha subunit.